Consider the following 240-residue polypeptide: tRNA (guanine-N(7)-)-methyltransferase (240 aa).

Glutamate 70, glutamate 95, aspartate 122, and aspartate 145 together coordinate S-adenosyl-L-methionine. Residue aspartate 145 is part of the active site. Residues lysine 149, aspartate 181, and threonine 218–glutamate 221 contribute to the substrate site.

This sequence belongs to the class I-like SAM-binding methyltransferase superfamily. TrmB family.

It carries out the reaction guanosine(46) in tRNA + S-adenosyl-L-methionine = N(7)-methylguanosine(46) in tRNA + S-adenosyl-L-homocysteine. It participates in tRNA modification; N(7)-methylguanine-tRNA biosynthesis. Its function is as follows. Catalyzes the formation of N(7)-methylguanine at position 46 (m7G46) in tRNA. In Pseudomonas entomophila (strain L48), this protein is tRNA (guanine-N(7)-)-methyltransferase.